We begin with the raw amino-acid sequence, 412 residues long: Autophagy-related protein 18 (412 aa).

3 WD repeats span residues 100-139 (RFNKSVLTVRLNRDRIVVCLEDCIYIYNLKDMKMMHNIMD), 142-183 (TNKL…SVST), and 186-226 (AHEG…RLFE). The short motif at 227–230 (FRRG) is the L/FRRG motif element. The stretch at 232–271 (TRCVNIYSLCFSSDSKYLTSSSNTETVHVFKLEKTEGVDN) is one WD 4 repeat. Residues 363-412 (HNIGPKSDTSRASPTSTGSGGAAKSAEASNQSVPNMDDPDDFPPMSHTSG) form a disordered region. Positions 372 to 391 (SRASPTSTGSGGAAKSAEAS) are enriched in low complexity.

This sequence belongs to the WD repeat PROPPIN family. In terms of tissue distribution, expressed in neurons and intestinal cells.

The protein localises to the cytoplasmic vesicle. It is found in the phagosome membrane. The protein resides in the cytoplasm. Functionally, component of the autophagy machinery that is recruited to phosphatidylinositols on preautophagosomal structures, which are early autophagic structures, to promote autophagosome formation, and the subsequent degradation and clearance of engulfed apoptotic cells and P-granules in somatic cells. In particular, binds with high affinity to phosphatidylinositols including phosphatidylinositol 3-phosphate (PtdIns(3)P), phosphatidylinositol 4-phosphate (PtdIns(4)P), and phosphatidylinositol 5-phosphate (PtdIns(5)P), and more weakly to phosphatidylinositol 3,5-bisphosphate (PtdIns(3,5)P2). Plays a role in mitophagy, which is the autophagic consumption of mitochondria, in response to dietary restriction. Involved in xenophagy, the autophagy-mediated degradation of pathogens and pathogen products, such as toxins. Also plays a role in membrane-pore repair. In a daf-18/PTEN- and daf-16/FOXO-dependent manner, required for the proliferation of germ stem cell progenitors in the gonad during the late phases of larval development. By regulating the release of neurotransmitters and neuropeptides, involved in the control of lifespan in response to dietary restriction and daf-2 signaling. Probably through its involvement in autophagy, required for dauer formation. This Caenorhabditis elegans protein is Autophagy-related protein 18.